The primary structure comprises 613 residues: Pentatricopeptide repeat-containing protein At2g45350, chloroplastic (613 aa).

PPR repeat units lie at residues 85–119, 120–154, 155–185, 186–216, 219–250, 251–285, 286–312, 313–347, 349–383, 384–414, 415–449, 450–480, and 486–516; these read DPFL…GVSV, DKFS…GLWS, DLFL…MPKR, DSVS…MPME, NLIS…MPEK, DLIS…DVVT, WATM…MPHR, DVVA…SHLL, DDTT…QFYL, GGKL…IENK, SIDH…SLKP, DDIT…MRRK, and RLQH…MPVE. The tract at residues 521–596 is type E motif; sequence IWRTFLTACS…IPGCSWIELD (76 aa).

This sequence belongs to the PPR family. PCMP-E subfamily. Interacts with DYW1.

The protein localises to the plastid. It localises to the chloroplast. Its function is as follows. Plays a major role in chloroplast RNA editing. Acts as a site-recognition transacting factor to recruit C-deaminase. Involved in single RNA editing events. Required for the edition of the site 1 of ndhD (ndhD-1 site corresponding to cytidine-2), which is a plastid-encoded subunit of the NADH-plastoquinone oxidoreductase. The interaction with DYW1 is required for its function in editing the ndhD-1 site. In Arabidopsis thaliana (Mouse-ear cress), this protein is Pentatricopeptide repeat-containing protein At2g45350, chloroplastic (CRR4).